The following is a 332-amino-acid chain: 4-hydroxy-3-methylbut-2-enyl diphosphate reductase (332 aa).

Cysteine 13 lines the [4Fe-4S] cluster pocket. 2 residues coordinate (2E)-4-hydroxy-3-methylbut-2-enyl diphosphate: histidine 41 and histidine 75. Positions 41 and 75 each coordinate dimethylallyl diphosphate. Histidine 41 and histidine 75 together coordinate isopentenyl diphosphate. Position 97 (cysteine 97) interacts with [4Fe-4S] cluster. Residue histidine 125 participates in (2E)-4-hydroxy-3-methylbut-2-enyl diphosphate binding. Residue histidine 125 coordinates dimethylallyl diphosphate. Histidine 125 contributes to the isopentenyl diphosphate binding site. Residue glutamate 127 is the Proton donor of the active site. Residue threonine 168 participates in (2E)-4-hydroxy-3-methylbut-2-enyl diphosphate binding. A [4Fe-4S] cluster-binding site is contributed by cysteine 229. Residues serine 257, serine 258, asparagine 259, and serine 306 each contribute to the (2E)-4-hydroxy-3-methylbut-2-enyl diphosphate site. Dimethylallyl diphosphate contacts are provided by serine 257, serine 258, asparagine 259, and serine 306. Isopentenyl diphosphate is bound by residues serine 257, serine 258, asparagine 259, and serine 306.

It belongs to the IspH family. The cofactor is [4Fe-4S] cluster.

It carries out the reaction isopentenyl diphosphate + 2 oxidized [2Fe-2S]-[ferredoxin] + H2O = (2E)-4-hydroxy-3-methylbut-2-enyl diphosphate + 2 reduced [2Fe-2S]-[ferredoxin] + 2 H(+). The enzyme catalyses dimethylallyl diphosphate + 2 oxidized [2Fe-2S]-[ferredoxin] + H2O = (2E)-4-hydroxy-3-methylbut-2-enyl diphosphate + 2 reduced [2Fe-2S]-[ferredoxin] + 2 H(+). Its pathway is isoprenoid biosynthesis; dimethylallyl diphosphate biosynthesis; dimethylallyl diphosphate from (2E)-4-hydroxy-3-methylbutenyl diphosphate: step 1/1. It participates in isoprenoid biosynthesis; isopentenyl diphosphate biosynthesis via DXP pathway; isopentenyl diphosphate from 1-deoxy-D-xylulose 5-phosphate: step 6/6. Catalyzes the conversion of 1-hydroxy-2-methyl-2-(E)-butenyl 4-diphosphate (HMBPP) into a mixture of isopentenyl diphosphate (IPP) and dimethylallyl diphosphate (DMAPP). Acts in the terminal step of the DOXP/MEP pathway for isoprenoid precursor biosynthesis. The chain is 4-hydroxy-3-methylbut-2-enyl diphosphate reductase from Chlorobaculum tepidum (strain ATCC 49652 / DSM 12025 / NBRC 103806 / TLS) (Chlorobium tepidum).